The primary structure comprises 2148 residues: Polyketide synthase 1 (2148 aa).

An N-terminal acylcarrier protein transacylase domain (SAT) region spans residues 19-261; it reads FIFGDQSSCN…TPLAVHAPYH (243 aa). The Ketosynthase family 3 (KS3) domain occupies 394-829; the sequence is ESKIAIIGMS…GGNTALLVED (436 aa). Catalysis depends on for beta-ketoacyl synthase activity residues Cys566, His701, and His745. Residues 929 to 1233 are malonyl-CoA:ACP transacylase (MAT) domain; that stretch reads AFVFSGQGSQ…PSLMRNKDGW (305 aa). Ser1018 functions as the For acyl/malonyl transferase activity in the catalytic mechanism. Residues 1310–1624 are product template (PT) domain; the sequence is TASVHRIVHE…RKVLNTAMPP (315 aa). The N-terminal hotdog fold stretch occupies residues 1314 to 1447; the sequence is HRIVHESVEK…SSLHFEQPKV (134 aa). One can recognise a PKS/mFAS DH domain in the interval 1314-1619; the sequence is HRIVHESVEK…FQGIPRKVLN (306 aa). His1346 (proton acceptor; for dehydratase activity) is an active-site residue. Residues 1474-1619 form a C-terminal hotdog fold region; that stretch reads LNSRMSSGVI…FQGIPRKVLN (146 aa). The active-site Proton donor; for dehydratase activity is Asp1533. Residues 1619–1655 are disordered; sequence NTAMPPPKSQNEAPVRSGPAKPAVKPPRSASSEHSGH. Residues 1678-1752 enclose the Carrier 1 domain; that stretch reads RNPMLPVFKI…DLAAHLGMDT (75 aa). At Ser1712 the chain carries O-(pantetheine 4'-phosphoryl)serine. Positions 1755-1790 are enriched in low complexity; that stretch reads ADQSSGQSSSSGGLSPRSDSIGEMTSSATTPPSMSP. The tract at residues 1755–1796 is disordered; that stretch reads ADQSSGQSSSSGGLSPRSDSIGEMTSSATTPPSMSPRGSVSG. The 78-residue stretch at 1793-1870 folds into the Carrier 2 domain; sequence SVSGSQCKDV…SFKHMFQQGH (78 aa). Ser1830 carries the post-translational modification O-(pantetheine 4'-phosphoryl)serine. Residues 1882 to 2146 are thioesterase (TE) domain; the sequence is LKQYRATSTL…ERVAAFIRSI (265 aa). The active-site For thioesterase activity is Ser1973.

In terms of biological role, polyketide synthase; part of the Pks1 gene cluster that mediates the biosynthesis of an anthraquinone derivative pigment that contributes to conidial pigmentation that provides protection from UV radiation, heat and cold stress. The polyketide synthase Pks1 produces 1-acetyl-2,4,6,8-tetrahydroxy-9,10-anthraquinone though condensation of acetyl-CoA with malonyl-CoA. The dehydratase EthD and the laccase Mlac1 further convert the anthraquinone derivative into the final conidial pigment. In Metarhizium brunneum (strain ARSEF 3297), this protein is Polyketide synthase 1.